The chain runs to 51 residues: MARYRCCRSQSRSRYYRQRQRSRRRRRRSCQTRRRAMRCCRPRYRPRCRRH.

The segment covering 1-13 (MARYRCCRSQSRS) has biased composition (low complexity). The interval 1-30 (MARYRCCRSQSRSRYYRQRQRSRRRRRRSC) is disordered. Positions 14–30 (RYYRQRQRSRRRRRRSC) are enriched in basic residues. Cys40 and Cys48 form a disulfide bridge.

Belongs to the protamine P1 family. Cross-linked by interchain disulfide bonds around the DNA-helix. Post-translationally, phosphorylated by SRPK1. In terms of tissue distribution, testis.

Its subcellular location is the nucleus. It localises to the chromosome. Functionally, protamines substitute for histones in the chromatin of sperm during the haploid phase of spermatogenesis. They compact sperm DNA into a highly condensed, stable and inactive complex. The protein is Sperm protamine P1 (PRM1) of Homo sapiens (Human).